Reading from the N-terminus, the 267-residue chain is MSTSREDSVYLAKLAEQAERYEEMVENMKTVASSGQELSVEERNLLSVAYKNVIGARRASWRIVSSIEQKEESKEKSEHQVELICSYRSKIETELTKISDDILSVLDSHLIPSATTGESKVFYYKMKGDYHRYLAEFSSGDAREKATNASLEAYKTASEIATTELPPTHPIRLGLALNFSVFYYEIQNSPDKACHLAKQAFDDAIAELDTLSEESYKDSTLIMQLLRDNLTLWTSDMSESGQAEDQQQQQQHQQQQPPAAAEGEAPK.

Ser-2 carries the post-translational modification N-acetylserine. Lys-76 participates in a covalent cross-link: Glycyl lysine isopeptide (Lys-Gly) (interchain with G-Cter in ubiquitin). Ser-89 bears the Phosphoserine mark. Positions 236–267 (DMSESGQAEDQQQQQQHQQQQPPAAAEGEAPK) are disordered. Residues 243-267 (AEDQQQQQQHQQQQPPAAAEGEAPK) are compositionally biased toward low complexity.

It belongs to the 14-3-3 family. In terms of assembly, homodimer. Interacts with NTH1 (via N-terminus when phosphorylated by PKA); the interaction is direct and activates NTH1. Interacts with FIN1.

Its function is as follows. Involved in growth regulation. The sequence is that of Protein BMH1 (BMH1) from Saccharomyces cerevisiae (strain ATCC 204508 / S288c) (Baker's yeast).